Consider the following 158-residue polypeptide: Transcription elongation factor GreA (158 aa).

Residues 47–68 (AEYDAAKEAQGLLELKIKKMEE) adopt a coiled-coil conformation.

This sequence belongs to the GreA/GreB family.

Necessary for efficient RNA polymerase transcription elongation past template-encoded arresting sites. The arresting sites in DNA have the property of trapping a certain fraction of elongating RNA polymerases that pass through, resulting in locked ternary complexes. Cleavage of the nascent transcript by cleavage factors such as GreA or GreB allows the resumption of elongation from the new 3'terminus. GreA releases sequences of 2 to 3 nucleotides. This Flavobacterium psychrophilum (strain ATCC 49511 / DSM 21280 / CIP 103535 / JIP02/86) protein is Transcription elongation factor GreA.